The sequence spans 364 residues: Ribosomal RNA large subunit methyltransferase M (364 aa).

Residues serine 187, 220–223 (CPGG), aspartate 239, aspartate 259, and aspartate 276 contribute to the S-adenosyl-L-methionine site. The active-site Proton acceptor is lysine 305.

Belongs to the class I-like SAM-binding methyltransferase superfamily. RNA methyltransferase RlmE family. RlmM subfamily. Monomer.

Its subcellular location is the cytoplasm. The catalysed reaction is cytidine(2498) in 23S rRNA + S-adenosyl-L-methionine = 2'-O-methylcytidine(2498) in 23S rRNA + S-adenosyl-L-homocysteine + H(+). Catalyzes the 2'-O-methylation at nucleotide C2498 in 23S rRNA. In Aeromonas salmonicida (strain A449), this protein is Ribosomal RNA large subunit methyltransferase M.